Here is a 346-residue protein sequence, read N- to C-terminus: Histone PARylation factor 1 (346 aa).

Methionine 1 is subject to N-acetylmethionine. Residues 1 to 23 form a disordered region; that stretch reads MVGGGGKRRPGGEGPQCEKTTDV. The residue at position 19 (lysine 19) is an N6-acetyllysine. Serine 97 bears the ADP-ribosylserine mark. 2 positions are modified to N6-acetyllysine: lysine 186 and lysine 233. The residue at position 235 (aspartate 235) is a PolyADP-ribosyl aspartic acid. Tyrosine 238 carries the ADP-ribosyltyrosine modification. A PolyADP-ribosyl glutamic acid modification is found at glutamate 240. Residues 242–346 are interaction with PARP1; sequence PETDADLKRI…SQENIDQLAA (105 aa). The active-site Proton donor is the glutamate 284.

This sequence belongs to the HPF1 family. In terms of assembly, interacts with PARP1 (via the PARP catalytic domain). Interacts with PARP2 (via the PARP catalytic domain). Interacts with core nucleosomes in a PARP1- and PARP2-dependent manner.

It localises to the chromosome. It is found in the nucleus. Functionally, cofactor for serine ADP-ribosylation that confers serine specificity on PARP1 and PARP2 and plays a key role in DNA damage response. Initiates the repair of double-strand DNA breaks: recruited to DNA damage sites by PARP1 and PARP2 and switches the amino acid specificity of PARP1 and PARP2 from aspartate or glutamate to serine residues, licensing serine ADP-ribosylation of target proteins. Serine ADP-ribosylation of target proteins, such as histones, promotes decompaction of chromatin and the recruitment of repair factors leading to the reparation of DNA strand breaks. Serine ADP-ribosylation of proteins constitutes the primary form of ADP-ribosylation of proteins in response to DNA damage. HPF1 acts by completing the active site of PARP1 and PARP2: forms a composite active site composed of residues from HPF1 and PARP1 or PARP2. While HPF1 promotes the initiation of serine ADP-ribosylation, it restricts the polymerase activity of PARP1 and PARP2 in order to limit the length of poly-ADP-ribose chains. HPF1 also promotes tyrosine ADP-ribosylation, probably by conferring tyrosine specificity on PARP1. In Homo sapiens (Human), this protein is Histone PARylation factor 1.